Consider the following 454-residue polypeptide: Gastrin/cholecystokinin type B receptor (454 aa).

The Extracellular segment spans residues 1–57 (MELLKPNRSVLGSGPGPGASLCRSGGPLLNGSGTGNLSCEPPRIRGAGTRELELAIR). N-linked (GlcNAc...) asparagine glycans are attached at residues Asn-7, Asn-30, and Asn-36. Residues 58–79 (VTLYAVIFLMSVGGNVLIIVVL) traverse the membrane as a helical segment. At 80-87 (GLSRRLRT) the chain is on the cytoplasmic side. A helical membrane pass occupies residues 88–109 (VTNAFLLSLAVSDLLLAVACMP). Over 110–131 (FTLLPNLMGTFIFGTVVCKAVS) the chain is Extracellular. Cys-127 and Cys-205 are oxidised to a cystine. The chain crosses the membrane as a helical span at residues 132-150 (YFMGVSVSVSTLSLVAIAL). At 151-170 (ERYSAICRPLQARVWQTRSH) the chain is on the cytoplasmic side. A helical transmembrane segment spans residues 171–189 (AARVIVATWMLSGLLMVPY). Residues 190 to 219 (PVYTAVQPAGPRVLQCMHRWPSARVRQTWS) are Extracellular-facing. A helical membrane pass occupies residues 220 to 242 (VLLLLLLFFVPGVVMAVAYGLIS). At 243–340 (RELYLGLRFD…KLLAKKRVVR (98 aa)) the chain is on the cytoplasmic side. The interval 257–284 (SESQSRVGSQGGLPGGTGQGPAQANGRC) is disordered. Positions 265 to 275 (SQGGLPGGTGQ) are enriched in gly residues. The chain crosses the membrane as a helical span at residues 341 to 362 (MLLVIVVLFFLCWLPVYSANTW). At 363-380 (RAFDGPGAHRALSGAPIS) the chain is on the extracellular side. Residues 381 to 401 (FIHLLTYASACVNPLVYCFMH) traverse the membrane as a helical segment. Residues 402–454 (RRFRQACLDTCTRCCPRPPRARPRPLPDEDPPTPSIASLSRLSYTTISTLGPG) lie on the Cytoplasmic side of the membrane. Cys-415 carries S-palmitoyl cysteine lipidation. The disordered stretch occupies residues 422–441 (ARPRPLPDEDPPTPSIASLS).

Belongs to the G-protein coupled receptor 1 family.

The protein resides in the cell membrane. Functionally, receptor for gastrin and cholecystokinin. The CCK-B receptors occur throughout the central nervous system where they modulate anxiety, analgesia, arousal, and neuroleptic activity. This receptor mediates its action by association with G proteins that activate a phosphatidylinositol-calcium second messenger system. This Bos taurus (Bovine) protein is Gastrin/cholecystokinin type B receptor (CCKBR).